The primary structure comprises 327 residues: Phenylalanine--tRNA ligase alpha subunit (327 aa).

Mg(2+) is bound at residue Glu252.

This sequence belongs to the class-II aminoacyl-tRNA synthetase family. Phe-tRNA synthetase alpha subunit type 1 subfamily. In terms of assembly, tetramer of two alpha and two beta subunits. It depends on Mg(2+) as a cofactor.

It is found in the cytoplasm. The enzyme catalyses tRNA(Phe) + L-phenylalanine + ATP = L-phenylalanyl-tRNA(Phe) + AMP + diphosphate + H(+). The chain is Phenylalanine--tRNA ligase alpha subunit from Yersinia pestis bv. Antiqua (strain Angola).